A 148-amino-acid chain; its full sequence is Flavodoxin (148 aa).

Residues 4-145 (ALIVYGSTTG…DIVGWAHDVR (142 aa)) form the Flavodoxin-like domain.

Belongs to the flavodoxin family. Requires FMN as cofactor.

Low-potential electron donor to a number of redox enzymes. In Nitratidesulfovibrio vulgaris (strain ATCC 29579 / DSM 644 / CCUG 34227 / NCIMB 8303 / VKM B-1760 / Hildenborough) (Desulfovibrio vulgaris), this protein is Flavodoxin.